We begin with the raw amino-acid sequence, 172 residues long: Bcl-2-related protein A1 (172 aa).

Positions 77–97 (KEFEDGIINWGRIVTIFAFGG) match the BH1 motif. The BH2 motif lies at 132–147 (EWIRQNGGWEDGFIKK).

This sequence belongs to the Bcl-2 family. Interacts directly with BCL2L11/BIM and PMAIP1. Interacts directly with BAK1, BID, BMF and BBC3. Interacts with BOP. Interacts with isoform 3, isoform 4 and isoform 5 of ING4. Interacts with UBQLN4. In terms of tissue distribution, expressed in hemopoietic tissues, including bone marrow, spleen and thymus.

It localises to the cytoplasm. In terms of biological role, retards apoptosis induced by IL-3 deprivation. May function in the response of hemopoietic cells to external signals and in maintaining endothelial survival during infection. Can inhibit apoptosis induced by serum starvation in the mammary epithelial cell line HC11. The chain is Bcl-2-related protein A1 (Bcl2a1) from Mus musculus (Mouse).